A 337-amino-acid chain; its full sequence is Ornithine carbamoyltransferase (337 aa).

Carbamoyl phosphate contacts are provided by residues serine 56–threonine 59, glutamine 83, arginine 107, and histidine 134–glutamine 137. Residues asparagine 168, aspartate 232, and serine 236–methionine 237 contribute to the L-ornithine site. Residues cysteine 274 to leucine 275 and arginine 320 each bind carbamoyl phosphate.

Belongs to the aspartate/ornithine carbamoyltransferase superfamily. OTCase family.

Its subcellular location is the cytoplasm. The catalysed reaction is carbamoyl phosphate + L-ornithine = L-citrulline + phosphate + H(+). The protein operates within amino-acid biosynthesis; L-arginine biosynthesis; L-arginine from L-ornithine and carbamoyl phosphate: step 1/3. In terms of biological role, reversibly catalyzes the transfer of the carbamoyl group from carbamoyl phosphate (CP) to the N(epsilon) atom of ornithine (ORN) to produce L-citrulline. This chain is Ornithine carbamoyltransferase (argI), found in Shigella flexneri.